Here is a 602-residue protein sequence, read N- to C-terminus: Probable HECT-type ubiquitin ligase-interacting protein creD (602 aa).

2 disordered regions span residues 375–398 (EVDP…GALS) and 457–499 (TADY…MATP). Over residues 463 to 475 (PSSGSNSHSPASP) the composition is skewed to low complexity. Residues 477–492 (LSRRPSDEGYRDHDHI) show a composition bias toward basic and acidic residues.

This sequence belongs to the arrestin family. In terms of assembly, interacts with hulA.

Functionally, component of the regulatory network controlling carbon source utilization through ubiquitination and deubiquitination involving creA, creB, creC, creD and acrB. May be involved in signaling by recognizing appropriately phosphorylated substrates via its arrestin domains and then recruit a HECT-type ubiquitin ligase such as hulA, leading to ubiquitination of the substrate, providing a link between ubiquitination and phosphorylation in protein regulation and stability. This Aspergillus clavatus (strain ATCC 1007 / CBS 513.65 / DSM 816 / NCTC 3887 / NRRL 1 / QM 1276 / 107) protein is Probable HECT-type ubiquitin ligase-interacting protein creD (creD).